The chain runs to 82 residues: Small ribosomal subunit protein uS17 (82 aa).

It belongs to the universal ribosomal protein uS17 family. In terms of assembly, part of the 30S ribosomal subunit.

Its function is as follows. One of the primary rRNA binding proteins, it binds specifically to the 5'-end of 16S ribosomal RNA. The sequence is that of Small ribosomal subunit protein uS17 from Shewanella woodyi (strain ATCC 51908 / MS32).